Here is a 281-residue protein sequence, read N- to C-terminus: Insulin-like growth factor-binding protein 7 (281 aa).

A signal peptide spans 1–25; that stretch reads MERPPRALLLGAAGLLLLLLPLSSS. In terms of domain architecture, IGFBP N-terminal spans 27 to 113; sequence SSDACGPCVP…PATLAVCVCK (87 aa). 8 disulfide bridges follow: C31-C56, C34-C58, C39-C59, C47-C62, C70-C86, C80-C110, C112-C130, and C119-C155. A Kazal-like domain is found at 98–157; it reads GAAAGGPATLAVCVCKSRYPVCGSNGITYPSGCQLRAASLRAESRGEKAITQVSKGTCEQ. One can recognise an Ig-like C2-type domain in the interval 159 to 263; it reads PSIVTPPKDI…GQASAAAKIT (105 aa). N170 carries an N-linked (GlcNAc...) asparagine glycan. A disulfide bridge connects residues C180 and C247. S238 is modified (phosphoserine).

In terms of assembly, may interact with VPS24/CHMP3; the relevance of such interaction however remains unclear. Interacts with CD93; this interaction plays a role in endothelial cells angiogenesis. N-glycosylated. In terms of tissue distribution, expressed at high levels in lung, kidney, small intestine, testis and uterus and at moderate levels in liver.

The protein resides in the secreted. Functionally, binds IGF1 and IGF2 with a relatively low affinity. Stimulates prostacyclin (PGI2) production. Stimulates cell adhesion. Acts as a ligand for CD93 to play a role in angiogenesis. In Mus musculus (Mouse), this protein is Insulin-like growth factor-binding protein 7 (Igfbp7).